Here is a 584-residue protein sequence, read N- to C-terminus: MNNHIEALSYYLGAFVDELTLLNVCDVVISPGSRSTPIALLMEQHEGMNTYLHVDERSAGFFALGIAKAKKRPVALLCTSGTAAANYYPAVCEAFHSRVPLIVLTADRPHELRDVGAPQAMNQINLYGTFVKQFTEMALPEASEAMYHYARLTTQRMIASACLAPQGPVHLNFPVREPLIPDFSLESLWDKGRGEYTGVVQQGNAVMPSEYVDSLVGRLSHMEKGLIICGDDSHSEIAAFATQLAEKTGYPILADPLSNIRSGHHDKTMVIDCYDTFLRNELLKETWKPDVLIRFGGMPVSKALTQFIKKQTKAVHIVVDESGQWRDPALVATEVVQASDIAFCSALIEKMPVMKKNDWFRMWQHINEKTKETLREMETYDTAFEGRVITDIVRVLPEGATLFASNSMPIRDTDSFFFTSDKNIQVMANRGVNGIDGIISTALGASMICDPLVLVIGDLSFYHDLNGLLAAKLHELNITIVVVNNDGGGIFSFLPQYEKKEHFESLFGTPIGLDYEHVVTMYGGSFSRVNGWEQFREEVQKGVTTEGLHVVEICTNRDENLTLHRTLWAKTQDVITTSLQGESK.

This sequence belongs to the TPP enzyme family. MenD subfamily. Homodimer. Requires Mg(2+) as cofactor. The cofactor is Mn(2+). It depends on thiamine diphosphate as a cofactor.

The catalysed reaction is isochorismate + 2-oxoglutarate + H(+) = 5-enolpyruvoyl-6-hydroxy-2-succinyl-cyclohex-3-ene-1-carboxylate + CO2. It functions in the pathway quinol/quinone metabolism; 1,4-dihydroxy-2-naphthoate biosynthesis; 1,4-dihydroxy-2-naphthoate from chorismate: step 2/7. The protein operates within quinol/quinone metabolism; menaquinone biosynthesis. Its function is as follows. Catalyzes the thiamine diphosphate-dependent decarboxylation of 2-oxoglutarate and the subsequent addition of the resulting succinic semialdehyde-thiamine pyrophosphate anion to isochorismate to yield 2-succinyl-5-enolpyruvyl-6-hydroxy-3-cyclohexene-1-carboxylate (SEPHCHC). The chain is 2-succinyl-5-enolpyruvyl-6-hydroxy-3-cyclohexene-1-carboxylate synthase from Bacillus anthracis.